Consider the following 331-residue polypeptide: Centriolar satellite-associated tubulin polyglutamylase complex regulator 1 (331 aa).

Residues Met1–Asp111 are required for interaction with PCM1. The segment at Met1–Glu225 is required for interaction with TPGS1, LRRC49, and TTLL1. The required for interaction with TPGS2 stretch occupies residues Phe112–Thr331. The interval Ser288–Thr331 is disordered. Residues Glu318–Thr331 are compositionally biased toward acidic residues. Phosphoserine is present on Ser319.

This sequence belongs to the CSTPP1 family. Interacts with PCM1. Interacts with TTLL1, TPGS1, TPGS2 and LRRC49; the interactions link CSTPP1 to the complex TPGC. Binds to alpha-tubulin.

The protein resides in the cytoplasm. Its subcellular location is the cytoskeleton. It is found in the microtubule organizing center. It localises to the centrosome. The protein localises to the centriolar satellite. Regulator of the tubulin polyglutamylase complex (TPGC) that controls cytoskeletal organization, nuclear shape, and cilium disassembly by balancing microtubule and actin assembly. Regulates the assembly and stability of the TPGC and thereby modulates polyglutamylation of the microtubule, which antagonizes MAP4 binding. The protein is Centriolar satellite-associated tubulin polyglutamylase complex regulator 1 of Homo sapiens (Human).